An 82-amino-acid polypeptide reads, in one-letter code: MAADRAQNLQDTFLNHVRKTKTPLTIFLVNGVKLQGIVTWFDNFCLLLRRDGHSQLVYKHAISTIMPGAPIQLFEGGEDQPA.

Residues 11-71 (DTFLNHVRKT…ISTIMPGAPI (61 aa)) enclose the Sm domain.

Belongs to the Hfq family. As to quaternary structure, homohexamer.

RNA chaperone that binds small regulatory RNA (sRNAs) and mRNAs to facilitate mRNA translational regulation in response to envelope stress, environmental stress and changes in metabolite concentrations. Also binds with high specificity to tRNAs. The polypeptide is RNA-binding protein Hfq (Bradyrhizobium diazoefficiens (strain JCM 10833 / BCRC 13528 / IAM 13628 / NBRC 14792 / USDA 110)).